We begin with the raw amino-acid sequence, 534 residues long: Glucan endo-1,3-beta-glucosidase 12 (534 aa).

A signal peptide spans 1-24 (MGQRLNLVFWIFVSILAFLNFGMA). E120 functions as the Proton donor in the catalytic mechanism. A glycan (N-linked (GlcNAc...) asparagine) is linked at N127. E264 functions as the Nucleophile in the catalytic mechanism. 3 N-linked (GlcNAc...) asparagine glycosylation sites follow: N336, N357, and N375. Positions 348 to 379 (ENTTPVSPTNSTTGTSPSPSSSPIINGNSTVT) are disordered. Low complexity predominate over residues 349-377 (NTTPVSPTNSTTGTSPSPSSSPIINGNST). A disulfide bond links C392 and C455. 3 N-linked (GlcNAc...) asparagine glycosylation sites follow: N485, N491, and N495. A lipid anchor (GPI-anchor amidated serine) is attached at S507. Positions 508 to 534 (STNEAFRQMVVAVSVLLPCFVVCSSIW) are cleaved as a propeptide — removed in mature form.

It belongs to the glycosyl hydrolase 17 family. In terms of processing, contains two additional disulfide bonds.

It is found in the secreted. Its subcellular location is the cell wall. The protein resides in the cell membrane. The catalysed reaction is Hydrolysis of (1-&gt;3)-beta-D-glucosidic linkages in (1-&gt;3)-beta-D-glucans.. In Arabidopsis thaliana (Mouse-ear cress), this protein is Glucan endo-1,3-beta-glucosidase 12.